We begin with the raw amino-acid sequence, 121 residues long: Cell division protein FtsB (121 aa).

Residues 1 to 6 (MRNWRW) are Cytoplasmic-facing. The helical transmembrane segment at 7–24 (LLLVLAVLLAWLQYRFWF) threads the bilayer. Topologically, residues 25–121 (GPGNSGEVMM…PEPVDPVDHP (97 aa)) are periplasmic. Residues 31–66 (EVMMLEAQVAHQTQDNEGLRQRNQALAAEVKDLKDG) adopt a coiled-coil conformation. The interval 98 to 121 (APASAEASAPAQQAPEPVDPVDHP) is disordered. Low complexity predominate over residues 99 to 113 (PASAEASAPAQQAPE).

This sequence belongs to the FtsB family. In terms of assembly, part of a complex composed of FtsB, FtsL and FtsQ.

It is found in the cell inner membrane. In terms of biological role, essential cell division protein. May link together the upstream cell division proteins, which are predominantly cytoplasmic, with the downstream cell division proteins, which are predominantly periplasmic. This is Cell division protein FtsB from Xanthomonas axonopodis pv. citri (strain 306).